The following is a 186-amino-acid chain: Alkyl hydroperoxide reductase AhpD (186 aa).

Cys132 (proton donor) is an active-site residue. A disulfide bridge links Cys132 with Cys135. Cys135 serves as the catalytic Cysteine sulfenic acid (-SOH) intermediate.

Belongs to the AhpD family.

It carries out the reaction N(6)-[(R)-dihydrolipoyl]-L-lysyl-[lipoyl-carrier protein] + a hydroperoxide = N(6)-[(R)-lipoyl]-L-lysyl-[lipoyl-carrier protein] + an alcohol + H2O. In terms of biological role, antioxidant protein with alkyl hydroperoxidase activity. Required for the reduction of the AhpC active site cysteine residues and for the regeneration of the AhpC enzyme activity. This Anaeromyxobacter sp. (strain K) protein is Alkyl hydroperoxide reductase AhpD.